Reading from the N-terminus, the 352-residue chain is N-acetyl-gamma-glutamyl-phosphate reductase (352 aa).

Cysteine 155 is an active-site residue.

It belongs to the NAGSA dehydrogenase family. Type 1 subfamily.

Its subcellular location is the cytoplasm. It catalyses the reaction N-acetyl-L-glutamate 5-semialdehyde + phosphate + NADP(+) = N-acetyl-L-glutamyl 5-phosphate + NADPH + H(+). It functions in the pathway amino-acid biosynthesis; L-arginine biosynthesis; N(2)-acetyl-L-ornithine from L-glutamate: step 3/4. Its function is as follows. Catalyzes the NADPH-dependent reduction of N-acetyl-5-glutamyl phosphate to yield N-acetyl-L-glutamate 5-semialdehyde. The chain is N-acetyl-gamma-glutamyl-phosphate reductase from Rippkaea orientalis (strain PCC 8801 / RF-1) (Cyanothece sp. (strain PCC 8801)).